We begin with the raw amino-acid sequence, 468 residues long: Glutamyl-tRNA reductase (468 aa).

Substrate-binding positions include threonine 49–arginine 52, serine 109, glutamate 114–glutamine 116, and glutamine 120. Cysteine 50 functions as the Nucleophile in the catalytic mechanism. NADP(+) is bound at residue glycine 189–glycine 194. Residues valine 443–asparagine 468 form a disordered region. Over residues methionine 458–asparagine 468 the composition is skewed to polar residues.

It belongs to the glutamyl-tRNA reductase family. In terms of assembly, homodimer.

The enzyme catalyses (S)-4-amino-5-oxopentanoate + tRNA(Glu) + NADP(+) = L-glutamyl-tRNA(Glu) + NADPH + H(+). The protein operates within porphyrin-containing compound metabolism; protoporphyrin-IX biosynthesis; 5-aminolevulinate from L-glutamyl-tRNA(Glu): step 1/2. Catalyzes the NADPH-dependent reduction of glutamyl-tRNA(Glu) to glutamate 1-semialdehyde (GSA). This Mycobacterium tuberculosis (strain ATCC 25177 / H37Ra) protein is Glutamyl-tRNA reductase.